The primary structure comprises 546 residues: Cytochrome P450 monooxygenase alnH (546 aa).

The chain crosses the membrane as a helical span at residues 11–31 (VPYSVPLLGSTVVILIGFIAI). N-linked (GlcNAc...) asparagine glycosylation is found at N146, N258, and N425. C445 serves as a coordination point for heme.

Belongs to the cytochrome P450 family. Requires heme as cofactor.

The protein localises to the membrane. It participates in polyketide biosynthesis. Cytochrome P450 monooxygenase; part of the gene cluster that mediates the biosynthesis of asperlin, a polyketide showing anti-inflammatory, antitumor and antibiotic activities. The first step of the asperlin biosynthesis is the production of the intermediate 2,4,6-octatrienoic acid by the highly redusing polyketide synthase alnA with cleavage of the PKS product by the esterase alnB. 2,4,6-octatrienoic acid is further converted to asperlin via several steps involving the remaining enzymes from the cluster. This chain is Cytochrome P450 monooxygenase alnH, found in Emericella nidulans (strain FGSC A4 / ATCC 38163 / CBS 112.46 / NRRL 194 / M139) (Aspergillus nidulans).